A 298-amino-acid chain; its full sequence is Lipoyl synthase (298 aa).

[4Fe-4S] cluster is bound by residues cysteine 40, cysteine 45, cysteine 51, cysteine 67, cysteine 71, cysteine 74, and serine 280. Positions 53–269 (AVRRTATFMI…KEIAMAKGFS (217 aa)) constitute a Radical SAM core domain.

It belongs to the radical SAM superfamily. Lipoyl synthase family. [4Fe-4S] cluster serves as cofactor.

The protein resides in the cytoplasm. The catalysed reaction is [[Fe-S] cluster scaffold protein carrying a second [4Fe-4S](2+) cluster] + N(6)-octanoyl-L-lysyl-[protein] + 2 oxidized [2Fe-2S]-[ferredoxin] + 2 S-adenosyl-L-methionine + 4 H(+) = [[Fe-S] cluster scaffold protein] + N(6)-[(R)-dihydrolipoyl]-L-lysyl-[protein] + 4 Fe(3+) + 2 hydrogen sulfide + 2 5'-deoxyadenosine + 2 L-methionine + 2 reduced [2Fe-2S]-[ferredoxin]. The protein operates within protein modification; protein lipoylation via endogenous pathway; protein N(6)-(lipoyl)lysine from octanoyl-[acyl-carrier-protein]. Functionally, catalyzes the radical-mediated insertion of two sulfur atoms into the C-6 and C-8 positions of the octanoyl moiety bound to the lipoyl domains of lipoate-dependent enzymes, thereby converting the octanoylated domains into lipoylated derivatives. This chain is Lipoyl synthase, found in Bacillus pumilus (strain SAFR-032).